A 250-amino-acid chain; its full sequence is uncharacterized protein (250 aa).

A helical transmembrane segment spans residues 2–22 (ILRIIIFVIIILVVSLLLIYF).

It localises to the membrane. This is an uncharacterized protein from Acanthamoeba polyphaga (Amoeba).